Consider the following 675-residue polypeptide: DNA ligase (675 aa).

NAD(+) contacts are provided by residues D35–D39, S84–L85, and E118. K120 acts as the N6-AMP-lysine intermediate in catalysis. NAD(+)-binding residues include R141, E178, K295, and K319. Residues C413, C416, C431, and C436 each coordinate Zn(2+). The BRCT domain maps to G598 to S675.

The protein belongs to the NAD-dependent DNA ligase family. LigA subfamily. Requires Mg(2+) as cofactor. Mn(2+) serves as cofactor.

The catalysed reaction is NAD(+) + (deoxyribonucleotide)n-3'-hydroxyl + 5'-phospho-(deoxyribonucleotide)m = (deoxyribonucleotide)n+m + AMP + beta-nicotinamide D-nucleotide.. Its function is as follows. DNA ligase that catalyzes the formation of phosphodiester linkages between 5'-phosphoryl and 3'-hydroxyl groups in double-stranded DNA using NAD as a coenzyme and as the energy source for the reaction. It is essential for DNA replication and repair of damaged DNA. The chain is DNA ligase from Synechococcus sp. (strain RCC307).